The following is a 75-amino-acid chain: Protein SlyX homolog (75 aa).

This sequence belongs to the SlyX family.

This Vibrio vulnificus (strain CMCP6) protein is Protein SlyX homolog.